The chain runs to 191 residues: Photosystem I assembly protein Ycf4 (191 aa).

2 consecutive transmembrane segments (helical) span residues 34 to 54 (VASM…SSYF) and 68 to 88 (IFVP…LLAI).

It belongs to the Ycf4 family.

Its subcellular location is the cellular thylakoid membrane. Functionally, seems to be required for the assembly of the photosystem I complex. In Prochlorococcus marinus (strain NATL1A), this protein is Photosystem I assembly protein Ycf4.